The chain runs to 593 residues: Glyoxylate carboligase (593 aa).

This sequence belongs to the TPP enzyme family. In terms of assembly, homotetramer. It depends on Mg(2+) as a cofactor. Thiamine diphosphate is required as a cofactor.

It catalyses the reaction 2 glyoxylate + H(+) = 2-hydroxy-3-oxopropanoate + CO2. Its pathway is organic acid metabolism; glycolate degradation; 3-phospho-D-glycerate from glycolate: step 2/4. Its function is as follows. Catalyzes the condensation of two molecules of glyoxylate to give 2-hydroxy-3-oxopropanoate (also termed tartronate semialdehyde). In Escherichia coli O157:H7, this protein is Glyoxylate carboligase (gcl).